The following is a 329-amino-acid chain: Telomeric repeat-binding factor 2-interacting protein 1 (329 aa).

Residues 63–86 (AVSTDYVVACVESQRRLPLDLYRH) enclose the BRCT domain. The Myb-like domain maps to 94-153 (ASPRGRLPFTEAEDAALLRAVRERSGAPRVSGTALWKELECTGLTRHSWQAMRDRYLRHL). Residues 179 to 206 (EFESSESGSDTSDTPDELPLQNGEGTFP) are disordered. The short motif at 313-329 (AKFGAENVARRVAFRKS) is the Nuclear localization signal element.

Belongs to the RAP1 family. Homodimer. Component of the shelterin complex (telosome). Interacts with terf2; the interaction is direct.

The protein localises to the nucleus. It is found in the chromosome. It localises to the telomere. Functionally, acts both as a regulator of telomere function and as a transcription regulator. Involved in the regulation of telomere length and protection as a component of the shelterin complex (telosome). Does not bind DNA directly: recruited to telomeric double-stranded 5'-TTAGGG-3' repeats via its interaction with terf2. Independently of its function in telomeres, also acts as a transcription regulator: recruited to extratelomeric 5'-TTAGGG-3' sites via its association with terf2 or other factors, and regulates gene expression. The polypeptide is Telomeric repeat-binding factor 2-interacting protein 1 (TERF2IP) (Gallus gallus (Chicken)).